The following is a 140-amino-acid chain: Putative pre-16S rRNA nuclease (140 aa).

Belongs to the YqgF nuclease family.

The protein resides in the cytoplasm. In terms of biological role, could be a nuclease involved in processing of the 5'-end of pre-16S rRNA. The sequence is that of Putative pre-16S rRNA nuclease from Yersinia enterocolitica serotype O:8 / biotype 1B (strain NCTC 13174 / 8081).